Consider the following 650-residue polypeptide: Macrolide export ATP-binding/permease protein MacB (650 aa).

Residues 6 to 244 (LKLTGITRRF…ASSPEAASSP (239 aa)) enclose the ABC transporter domain. Residue 42–49 (GASGSGKS) participates in ATP binding. A disordered region spans residues 227-246 (QTRPEEATASSPEAASSPAT). The span at 233–246 (ATASSPEAASSPAT) shows a compositional bias: low complexity. Transmembrane regions (helical) follow at residues 275–295 (FLTM…VALG), 523–543 (LTLL…IGVM), 580–600 (LVCL…GVLF), and 615–635 (SIIA…FFPA).

This sequence belongs to the ABC transporter superfamily. Macrolide exporter (TC 3.A.1.122) family. As to quaternary structure, homodimer. Part of the tripartite efflux system MacAB-TolC, which is composed of an inner membrane transporter, MacB, a periplasmic membrane fusion protein, MacA, and an outer membrane component, TolC. The complex forms a large protein conduit and can translocate molecules across both the inner and outer membranes. Interacts with MacA.

It is found in the cell inner membrane. Functionally, part of the tripartite efflux system MacAB-TolC. MacB is a non-canonical ABC transporter that contains transmembrane domains (TMD), which form a pore in the inner membrane, and an ATP-binding domain (NBD), which is responsible for energy generation. Confers resistance against macrolides. This chain is Macrolide export ATP-binding/permease protein MacB, found in Pectobacterium atrosepticum (strain SCRI 1043 / ATCC BAA-672) (Erwinia carotovora subsp. atroseptica).